The sequence spans 89 residues: Microcin N (89 aa).

An N-terminal signal peptide occupies residues 1-15 (MRELDREELNCVGGA).

It belongs to the class IIa microcin family. In terms of processing, mass spectrometry suggests 3 of the 4 Met residues of the mature peptide are oxidized.

The protein resides in the secreted. Its function is as follows. Active against E.coli and Salmonella, but not Listeria or Campylobacter. Channel-forming microcin. Probably neutralized by its immunity protein McnI. The protein is Microcin N of Escherichia coli.